The chain runs to 153 residues: MKNPRAGRPLHCRSVEELPGVTCFLPEGVPPARLRNVVLSVDEVEALRLADLEGMYHADAADKMKVSRQTFGRIIKSARKKVADALVGGKTICIEGGKITGSCLTGESEEPAVCICLHCGYEQPHVPGVPCRTANCPHCGKMLIRKGRYSRVD.

The protein belongs to the UPF0251 family.

The protein is UPF0251 protein CT0950 of Chlorobaculum tepidum (strain ATCC 49652 / DSM 12025 / NBRC 103806 / TLS) (Chlorobium tepidum).